Consider the following 164-residue polypeptide: Protein-export protein SecB (164 aa).

Belongs to the SecB family. In terms of assembly, homotetramer, a dimer of dimers. One homotetramer interacts with 1 SecA dimer.

The protein resides in the cytoplasm. In terms of biological role, one of the proteins required for the normal export of preproteins out of the cell cytoplasm. It is a molecular chaperone that binds to a subset of precursor proteins, maintaining them in a translocation-competent state. It also specifically binds to its receptor SecA. This is Protein-export protein SecB from Caulobacter sp. (strain K31).